The chain runs to 747 residues: Mediator of RNA polymerase II transcription subunit 25 (747 aa).

Residues Met1 to Leu226 form an interaction with the Mediator complex region. Disordered stretches follow at residues Gly233 to Val274 and Leu299 to Gly390. 2 stretches are compositionally biased toward pro residues: residues Gln263–Tyr272 and Pro326–Ser342. The interaction with VP16 stretch occupies residues Leu389–Asn543. Residues Val395 to Lys545 form an interaction with CREBBP region. The disordered stretch occupies residues Gln548–Ile747. Interaction with RARA regions lie at residues Ala564–Pro653 and Pro640–Gln707. The span at Ala598–Ala611 shows a compositional bias: low complexity. A compositionally biased stretch (pro residues) spans Gln612–Ile634. Residues Leu646 to Leu650 carry the LXXLL motif motif. Composition is skewed to pro residues over residues Asn652–Gln664, Pro673–His683, and Leu691–Pro713. Arg725 carries the asymmetric dimethylarginine modification. Over residues Met738–Ile747 the composition is skewed to acidic residues.

It belongs to the Mediator complex subunit 25 family. As to quaternary structure, component of the Mediator complex, which is composed of MED1, MED4, MED6, MED7, MED8, MED9, MED10, MED11, MED12, MED13, MED13L, MED14, MED15, MED16, MED17, MED18, MED19, MED20, MED21, MED22, MED23, MED24, MED25, MED26, MED27, MED29, MED30, MED31, CCNC, CDK8 and CDC2L6/CDK11. The MED12, MED13, CCNC and CDK8 subunits form a distinct module termed the CDK8 module. Mediator containing the CDK8 module is less active than Mediator lacking this module in supporting transcriptional activation. Individual preparations of the Mediator complex lacking one or more distinct subunits have been variously termed ARC, CRSP, DRIP, PC2, SMCC and TRAP. Interacts with CREBBP. Interacts with ESR1, GR, RARA, RXRA and THRB in a ligand-dependent fashion. Binds the Herpes simplex virus activator VP16. As to expression, ubiquitously expressed. Highest levels in brain, heart, kidney, peripheral leukocytes, placenta, skeletal muscle and spleen.

Its subcellular location is the nucleus. Component of the Mediator complex, a coactivator involved in the regulated transcription of nearly all RNA polymerase II-dependent genes. Mediator functions as a bridge to convey information from gene-specific regulatory proteins to the basal RNA polymerase II transcription machinery. Mediator is recruited to promoters by direct interactions with regulatory proteins and serves as a scaffold for the assembly of a functional preinitiation complex with RNA polymerase II and the general transcription factors. Required for RARA/RXRA-mediated transcription. The chain is Mediator of RNA polymerase II transcription subunit 25 (MED25) from Homo sapiens (Human).